A 349-amino-acid chain; its full sequence is Magnesium-protoporphyrin IX monomethyl ester [oxidative] cyclase (349 aa).

Residues 1-10 (MTATTATAPA) are compositionally biased toward low complexity. Residues 1–23 (MTATTATAPAMRGGGRNELPPHL) form a disordered region.

The protein belongs to the AcsF family. Requires Fe cation as cofactor.

It carries out the reaction Mg-protoporphyrin IX 13-monomethyl ester + 3 NADPH + 3 O2 + 2 H(+) = 3,8-divinyl protochlorophyllide a + 3 NADP(+) + 5 H2O. Its pathway is porphyrin-containing compound metabolism; chlorophyll biosynthesis (light-independent). Functionally, catalyzes the formation of the isocyclic ring in chlorophyll biosynthesis. Mediates the cyclase reaction, which results in the formation of divinylprotochlorophyllide (Pchlide) characteristic of all chlorophylls from magnesium-protoporphyrin IX 13-monomethyl ester (MgPMME). In Prochlorococcus marinus (strain MIT 9303), this protein is Magnesium-protoporphyrin IX monomethyl ester [oxidative] cyclase.